Here is a 283-residue protein sequence, read N- to C-terminus: Glutamyl-Q tRNA(Asp) synthetase (283 aa).

L-glutamate is bound by residues 5–9 and glutamate 41; that span reads RFAPT. A 'HIGH' region motif is present at residues 8 to 18; sequence PTPSGPLHLGS. Zn(2+) contacts are provided by cysteine 97, cysteine 99, tyrosine 111, and cysteine 115. L-glutamate is bound by residues tyrosine 168 and arginine 186. Positions 224–228 match the 'KMSKS' region motif; it reads KLSKQ. Residue lysine 227 participates in ATP binding.

It belongs to the class-I aminoacyl-tRNA synthetase family. GluQ subfamily. It depends on Zn(2+) as a cofactor.

Functionally, catalyzes the tRNA-independent activation of glutamate in presence of ATP and the subsequent transfer of glutamate onto a tRNA(Asp). Glutamate is transferred on the 2-amino-5-(4,5-dihydroxy-2-cyclopenten-1-yl) moiety of the queuosine in the wobble position of the QUC anticodon. This is Glutamyl-Q tRNA(Asp) synthetase from Idiomarina loihiensis (strain ATCC BAA-735 / DSM 15497 / L2-TR).